A 548-amino-acid polypeptide reads, in one-letter code: Druantia protein DruB (548 aa).

It localises to the cytoplasm. In terms of biological role, component of antiviral defense system Druantia type I, composed of DruA, DruB, DruC, DruD and DruE. Expression of Druantia in E.coli (strain MG1655) confers resistance to phage lambda, SECphi18, SECphi27 and T4. This is Druantia protein DruB from Escherichia coli (strain UMEA 4076-1).